Consider the following 64-residue polypeptide: MAIKPKYIKQLGNVLLERYPDSFNTDFETNKDSVTTLTTVESKGVRNRIAGYVTQKKAQAAQKA.

This sequence belongs to the eukaryotic ribosomal protein eS17 family.

In Halorubrum lacusprofundi (strain ATCC 49239 / DSM 5036 / JCM 8891 / ACAM 34), this protein is Small ribosomal subunit protein eS17.